A 316-amino-acid chain; its full sequence is Mycothiol acetyltransferase (316 aa).

N-acetyltransferase domains lie at 16-153 (REVR…VPAV) and 156-316 (VRIR…PAAN). A 1D-myo-inositol 2-(L-cysteinylamino)-2-deoxy-alpha-D-glucopyranoside-binding site is contributed by E36. Residues 83 to 85 (LVV) and 91 to 96 (RRGIGS) contribute to the acetyl-CoA site. The 1D-myo-inositol 2-(L-cysteinylamino)-2-deoxy-alpha-D-glucopyranoside site is built by E183, K228, and E238. Residues 242 to 244 (VGV) and 249 to 255 (QGRGLGQ) contribute to the acetyl-CoA site. Position 283 (Y283) interacts with 1D-myo-inositol 2-(L-cysteinylamino)-2-deoxy-alpha-D-glucopyranoside. 288–293 (NVAAVR) is an acetyl-CoA binding site.

This sequence belongs to the acetyltransferase family. MshD subfamily. As to quaternary structure, monomer.

It carries out the reaction 1D-myo-inositol 2-(L-cysteinylamino)-2-deoxy-alpha-D-glucopyranoside + acetyl-CoA = mycothiol + CoA + H(+). Its function is as follows. Catalyzes the transfer of acetyl from acetyl-CoA to desacetylmycothiol (Cys-GlcN-Ins) to form mycothiol. This chain is Mycothiol acetyltransferase, found in Mycolicibacterium paratuberculosis (strain ATCC BAA-968 / K-10) (Mycobacterium paratuberculosis).